The sequence spans 877 residues: Putative ankyrin repeat protein R748 (877 aa).

6 ANK repeats span residues 44–74, 79–109, 115–145, 202–231, 243–272, and 282–311; these read IRHICLTGSYNNNQMSIMKILMNKFPKTINV, QNNTYLHQSIFNRHKIFVDFFMNELNDNINY, IGISHLHALVNYGYIDHIETAIIKDPGAIQQ, MGYRAIECAVRYCSTDVIDELISLGFSINE, NNNDLIGFATQIDRLDMVKHLINIGAPIHM, and LVPTCLVVAIKFKRDQCIHYLLNLPESIQA. The tract at residues 525–579 is disordered; the sequence is DSDEDPVCDSNESDNSNDINNHVKSDNKLNSSNDYYDEDDSEDNYNNQSDDEPLV. A compositionally biased stretch (low complexity) spans 533–544; that stretch reads DSNESDNSNDIN.

This chain is Putative ankyrin repeat protein R748, found in Acanthamoeba polyphaga mimivirus (APMV).